Consider the following 249-residue polypeptide: 4-hydroxy-tetrahydrodipicolinate reductase (249 aa).

NAD(+) is bound by residues 8 to 13, 87 to 89, and 111 to 114; these read GVTGQM, GTT, and ATNF. Histidine 143 (proton donor/acceptor) is an active-site residue. Histidine 144 provides a ligand contact to (S)-2,3,4,5-tetrahydrodipicolinate. The active-site Proton donor is the lysine 147. 153–154 is a binding site for (S)-2,3,4,5-tetrahydrodipicolinate; it reads GT.

It belongs to the DapB family.

The protein resides in the cytoplasm. It catalyses the reaction (S)-2,3,4,5-tetrahydrodipicolinate + NAD(+) + H2O = (2S,4S)-4-hydroxy-2,3,4,5-tetrahydrodipicolinate + NADH + H(+). The enzyme catalyses (S)-2,3,4,5-tetrahydrodipicolinate + NADP(+) + H2O = (2S,4S)-4-hydroxy-2,3,4,5-tetrahydrodipicolinate + NADPH + H(+). It participates in amino-acid biosynthesis; L-lysine biosynthesis via DAP pathway; (S)-tetrahydrodipicolinate from L-aspartate: step 4/4. Catalyzes the conversion of 4-hydroxy-tetrahydrodipicolinate (HTPA) to tetrahydrodipicolinate. This chain is 4-hydroxy-tetrahydrodipicolinate reductase, found in Haloarcula marismortui (strain ATCC 43049 / DSM 3752 / JCM 8966 / VKM B-1809) (Halobacterium marismortui).